Here is a 192-residue protein sequence, read N- to C-terminus: A-type ATP synthase subunit E (192 aa).

The interval 1–66 (MSLDTVVEDI…QERDQKLSSA (66 aa)) is disordered. Positions 8–26 (EDIRDEARARADEIRSEGE) are enriched in basic and acidic residues. The span at 27–49 (ERAEEIIDEAEREADDIVDEAER) shows a compositional bias: acidic residues. A compositionally biased stretch (basic and acidic residues) spans 50-66 (EAERKISQERDQKLSSA).

Belongs to the V-ATPase E subunit family. In terms of assembly, has multiple subunits with at least A(3), B(3), C, D, E, F, H, I and proteolipid K(x).

It is found in the cell membrane. Component of the A-type ATP synthase that produces ATP from ADP in the presence of a proton gradient across the membrane. This Natronomonas pharaonis (strain ATCC 35678 / DSM 2160 / CIP 103997 / JCM 8858 / NBRC 14720 / NCIMB 2260 / Gabara) (Halobacterium pharaonis) protein is A-type ATP synthase subunit E.